Here is a 1381-residue protein sequence, read N- to C-terminus: DNA-directed RNA polymerase subunit beta'' (1381 aa).

Residues C220, C293, C300, and C303 each coordinate Zn(2+).

This sequence belongs to the RNA polymerase beta' chain family. RpoC2 subfamily. As to quaternary structure, in plastids the minimal PEP RNA polymerase catalytic core is composed of four subunits: alpha, beta, beta', and beta''. When a (nuclear-encoded) sigma factor is associated with the core the holoenzyme is formed, which can initiate transcription. Zn(2+) is required as a cofactor.

The protein resides in the plastid. The protein localises to the chloroplast. It carries out the reaction RNA(n) + a ribonucleoside 5'-triphosphate = RNA(n+1) + diphosphate. Functionally, DNA-dependent RNA polymerase catalyzes the transcription of DNA into RNA using the four ribonucleoside triphosphates as substrates. The protein is DNA-directed RNA polymerase subunit beta'' of Draba nemorosa (Woodland whitlowgrass).